The primary structure comprises 346 residues: STE20-related kinase adapter protein stlk (346 aa).

One can recognise a Protein kinase domain in the interval 10–298 (YKLLEILKNG…ASKLMTHSFL (289 aa)). Residues 16 to 24 (LKNGMIGTV) and Lys-38 each bind ATP.

The protein belongs to the protein kinase superfamily. STE Ser/Thr protein kinase family. STE20 subfamily.

The protein is STE20-related kinase adapter protein stlk of Drosophila melanogaster (Fruit fly).